Here is a 253-residue protein sequence, read N- to C-terminus: Uracil-DNA glycosylase (253 aa).

Residue D79 is the Proton acceptor of the active site.

Belongs to the uracil-DNA glycosylase (UDG) superfamily. UNG family.

The protein localises to the cytoplasm. It catalyses the reaction Hydrolyzes single-stranded DNA or mismatched double-stranded DNA and polynucleotides, releasing free uracil.. Its function is as follows. Excises uracil residues from the DNA which can arise as a result of misincorporation of dUMP residues by DNA polymerase or due to deamination of cytosine. In Xylella fastidiosa (strain M12), this protein is Uracil-DNA glycosylase.